A 423-amino-acid chain; its full sequence is Methanol:N,N-dimethyl-4-nitrosoaniline oxidoreductase (423 aa).

Belongs to the iron-containing alcohol dehydrogenase family. Homodecamer. Requires Mg(2+) as cofactor. Zn(2+) serves as cofactor. The cofactor is NADPH.

It carries out the reaction methanol + A = formaldehyde + AH2. Its function is as follows. Catalyzes the oxidation of methanol to yield formaldehyde. While the in vivo electron acceptor is not known, N,N-dimethyl-4-nitrosoaniline (NDMA) can serve this function in vitro and is reduced to 4-(hydroxylamino)-N,N-dimethylaniline. It is also able to use ethanol and formaldehyde with an activity comparable to methanol, and has a weak activity with methylamine as substrate. This Mycobacterium sp. (strain DSM 3803 / JC1) protein is Methanol:N,N-dimethyl-4-nitrosoaniline oxidoreductase.